A 43-amino-acid polypeptide reads, in one-letter code: VTCDLLSLQIKGIAINDSACAAHCLAMRRKGGSCKQGVCVCRN.

3 disulfides stabilise this stretch: Cys-3/Cys-34, Cys-20/Cys-39, and Cys-24/Cys-41.

The protein belongs to the invertebrate defensin family. Type 1 subfamily. As to expression, hemolymph.

Its subcellular location is the secreted. Its function is as follows. Shows potent antibacterial activity against Gram-positive bacteria. The protein is Holotricin-1 of Holotrichia diomphalia (Korean black chafer).